The chain runs to 350 residues: Nicotinate-nucleotide--dimethylbenzimidazole phosphoribosyltransferase (350 aa).

Catalysis depends on glutamate 316, which acts as the Proton acceptor.

This sequence belongs to the CobT family.

It carries out the reaction 5,6-dimethylbenzimidazole + nicotinate beta-D-ribonucleotide = alpha-ribazole 5'-phosphate + nicotinate + H(+). Its pathway is nucleoside biosynthesis; alpha-ribazole biosynthesis; alpha-ribazole from 5,6-dimethylbenzimidazole: step 1/2. In terms of biological role, catalyzes the synthesis of alpha-ribazole-5'-phosphate from nicotinate mononucleotide (NAMN) and 5,6-dimethylbenzimidazole (DMB). The protein is Nicotinate-nucleotide--dimethylbenzimidazole phosphoribosyltransferase of Pseudomonas savastanoi pv. phaseolicola (strain 1448A / Race 6) (Pseudomonas syringae pv. phaseolicola (strain 1448A / Race 6)).